Here is a 96-residue protein sequence, read N- to C-terminus: Nucleoid-associated protein DR_0199 (96 aa).

It belongs to the YbaB/EbfC family. As to quaternary structure, homodimer.

The protein localises to the cytoplasm. It is found in the nucleoid. Functionally, binds to DNA and alters its conformation. May be involved in regulation of gene expression, nucleoid organization and DNA protection. This chain is Nucleoid-associated protein DR_0199, found in Deinococcus radiodurans (strain ATCC 13939 / DSM 20539 / JCM 16871 / CCUG 27074 / LMG 4051 / NBRC 15346 / NCIMB 9279 / VKM B-1422 / R1).